A 70-amino-acid chain; its full sequence is Conotoxin ArMKLT2-0111 (70 aa).

A signal peptide spans 1-22 (MKLTCVLIIAVLFLTACQLTTG). The propeptide occupies 23–40 (EQKDHALRSTDKNSKLTR). Residue Gln41 is modified to Pyrrolidone carboxylic acid. Cystine bridges form between Cys42–Cys56, Cys49–Cys60, and Cys55–Cys67.

This sequence belongs to the conotoxin O1 superfamily. In terms of tissue distribution, expressed by the venom duct.

It localises to the secreted. The polypeptide is Conotoxin ArMKLT2-0111 (Conus arenatus (Sand-dusted cone)).